Reading from the N-terminus, the 248-residue chain is Acetoacetyl-CoA reductase (248 aa).

NADP(+) contacts are provided by residues 14-16 (GGI), R42, and 90-94 (NAGIT). Substrate contacts are provided by residues D96 and 149–152 (QFGQ). Y155 (proton acceptor) is an active-site residue. 185–188 (PGYT) is an NADP(+) binding site. Substrate contacts are provided by residues 186–187 (GY) and R197.

Belongs to the short-chain dehydrogenases/reductases (SDR) family.

It is found in the cytoplasm. It carries out the reaction a (3R)-3-hydroxyacyl-CoA + NADP(+) = a 3-oxoacyl-CoA + NADPH + H(+). It participates in biopolymer metabolism; poly-(R)-3-hydroxybutanoate biosynthesis. This is Acetoacetyl-CoA reductase (phaB) from Acinetobacter sp. (strain RA3849).